We begin with the raw amino-acid sequence, 337 residues long: Adenylosuccinate synthetase (337 aa).

Residues Gly12–Lys18 and Gly42–Thr44 contribute to the GTP site. The active-site Proton acceptor is the Asp13. Asp13 and Gly42 together coordinate Mg(2+). IMP contacts are provided by residues Asp13 to Lys16, Asn40 to His43, Thr127, Arg141, Gln179, Thr194, and Arg256. The active-site Proton donor is the His43. Position 252 to 258 (Thr252 to Arg258) interacts with substrate. Residues Arg258, Cys284–Asp286, and Ser324–Gly326 contribute to the GTP site.

Belongs to the adenylosuccinate synthetase family. In terms of assembly, homodimer. It depends on Mg(2+) as a cofactor.

It is found in the cytoplasm. The catalysed reaction is IMP + L-aspartate + GTP = N(6)-(1,2-dicarboxyethyl)-AMP + GDP + phosphate + 2 H(+). The protein operates within purine metabolism; AMP biosynthesis via de novo pathway; AMP from IMP: step 1/2. Its function is as follows. Plays an important role in the de novo pathway of purine nucleotide biosynthesis. Catalyzes the first committed step in the biosynthesis of AMP from IMP. This is Adenylosuccinate synthetase from Methanococcus maripaludis (strain C5 / ATCC BAA-1333).